Consider the following 1171-residue polypeptide: Pyruvate-flavodoxin oxidoreductase (1171 aa).

4Fe-4S ferredoxin-type domains follow at residues 682 to 711 (EVPV…PALL) and 736 to 767 (YHLA…MQSL). [4Fe-4S] cluster-binding residues include C691, C694, C697, C701, C745, C748, C751, C755, C811, C814, C839, and C1072.

This sequence belongs to the pyruvate:ferredoxin/flavodoxin oxidoreductase family. Requires [4Fe-4S] cluster as cofactor.

It catalyses the reaction oxidized [flavodoxin] + pyruvate + CoA + 2 H(+) = reduced [flavodoxin] + acetyl-CoA + CO2. Functionally, oxidoreductase required for the transfer of electrons from pyruvate to flavodoxin, which reduces nitrogenase. The chain is Pyruvate-flavodoxin oxidoreductase (nifJ) from Klebsiella pneumoniae.